A 389-amino-acid polypeptide reads, in one-letter code: Serpentine receptor class alpha/beta-14 (389 aa).

Residues 1–45 are Extracellular-facing; sequence MPSDDFVKTARKALISHSVSIQNYTEDDCQIAFHATTNSFMQTIR. Asn23 carries N-linked (GlcNAc...) asparagine glycosylation. The helical transmembrane segment at 46–66 threads the bilayer; the sequence is LVHIFFCTFGAISSSLFIYVL. Over 67–81 the chain is Cytoplasmic; the sequence is LNSSSRNLHRNLRIS. Residues 82-102 form a helical membrane-spanning segment; that stretch reads LASLAFAALIACLQLDFIAFY. At 103–123 the chain is on the extracellular side; it reads HLALTLTADNACDSMYEARKC. Residues Cys123 and Cys198 are joined by a disulfide bond. Residues 124–144 traverse the membrane as a helical segment; that stretch reads AILRFPVVLSIYATLCGIIVL. Residues 145 to 167 lie on the Cytoplasmic side of the membrane; sequence AIERTIATLKYKTYEANGSRVVG. A helical transmembrane segment spans residues 168–188; sequence LVLVTGQWFVCIIVAVFSVLL. The Extracellular segment spans residues 189–208; sequence RSDPGYVHYCTAYVSHPRTS. Residues 209 to 229 traverse the membrane as a helical segment; sequence VFSLCFMSALEVATLVYFVLL. Residues 230-268 lie on the Cytoplasmic side of the membrane; that stretch reads LQSNQRRQVNEFVNKAMHSLSERYQLQENVRIMKILIPS. Residues 269-289 form a helical membrane-spanning segment; the sequence is ITVHAILGFIGLGSMLAFAII. Topologically, residues 290-303 are extracellular; sequence YRYADERLIVGFAP. A helical membrane pass occupies residues 304–324; it reads FSEVVLLVIPIYAVVFPIVAV. The Cytoplasmic portion of the chain corresponds to 325–389; that stretch reads VQNKQLRLAS…FDLLNEMWKK (65 aa).

It belongs to the nematode receptor-like protein srab family.

Its subcellular location is the membrane. The sequence is that of Serpentine receptor class alpha/beta-14 from Caenorhabditis elegans.